The following is a 270-amino-acid chain: 4-hydroxy-tetrahydrodipicolinate reductase (270 aa).

Residues 8-13 and Glu-34 contribute to the NAD(+) site; that span reads GAAGRM. Arg-35 is a binding site for NADP(+). Residues 98–100 and 122–125 contribute to the NAD(+) site; these read GST and SPNM. His-155 serves as the catalytic Proton donor/acceptor. His-156 is a (S)-2,3,4,5-tetrahydrodipicolinate binding site. Lys-159 serves as the catalytic Proton donor. 165–166 lines the (S)-2,3,4,5-tetrahydrodipicolinate pocket; that stretch reads GT.

Belongs to the DapB family.

Its subcellular location is the cytoplasm. The catalysed reaction is (S)-2,3,4,5-tetrahydrodipicolinate + NAD(+) + H2O = (2S,4S)-4-hydroxy-2,3,4,5-tetrahydrodipicolinate + NADH + H(+). It carries out the reaction (S)-2,3,4,5-tetrahydrodipicolinate + NADP(+) + H2O = (2S,4S)-4-hydroxy-2,3,4,5-tetrahydrodipicolinate + NADPH + H(+). Its pathway is amino-acid biosynthesis; L-lysine biosynthesis via DAP pathway; (S)-tetrahydrodipicolinate from L-aspartate: step 4/4. Its function is as follows. Catalyzes the conversion of 4-hydroxy-tetrahydrodipicolinate (HTPA) to tetrahydrodipicolinate. The sequence is that of 4-hydroxy-tetrahydrodipicolinate reductase from Anaeromyxobacter dehalogenans (strain 2CP-C).